A 217-amino-acid polypeptide reads, in one-letter code: tRNA (guanine-N(7)-)-methyltransferase (217 aa).

Residues E44, E69, D96, and D118 each contribute to the S-adenosyl-L-methionine site. D118 is an active-site residue. Substrate is bound by residues K122, D154, and 191–194 (TEYE).

This sequence belongs to the class I-like SAM-binding methyltransferase superfamily. TrmB family.

It catalyses the reaction guanosine(46) in tRNA + S-adenosyl-L-methionine = N(7)-methylguanosine(46) in tRNA + S-adenosyl-L-homocysteine. It participates in tRNA modification; N(7)-methylguanine-tRNA biosynthesis. In terms of biological role, catalyzes the formation of N(7)-methylguanine at position 46 (m7G46) in tRNA. The polypeptide is tRNA (guanine-N(7)-)-methyltransferase (Bacillus anthracis (strain CDC 684 / NRRL 3495)).